The primary structure comprises 891 residues: MSISNGWSSSSIISDVLPEEEFEEVEEDELILNENDRLKFRVDELEKIVVAQRNEILLLQSSTVEILRRLQNLEIQDQSRSPTCSGYSSLPRRISGSKSSYTMSPSHAPPRSSHANSKSLYINGMNNNSEEVSPGPPRHRPPTRGSDGMVNVSVGKSARGSPMRKWVSTHDMKDTDRFRRLSTSSEASTSATMNPIVNSVRRLSTTHRQSSPSLLSLCSVISRSPSTSSILRKNNRTCQFSNGSGHLPIFIGGKTVQVPVPTGYENMDPTMDQDPPTMKVTLKHVYSYRGKDVRSNIEMLPTGELVFFSANLVVLMNITGEDRSQRIYHGHTCDVKCITLHPNKILVASGQSSCHSVEKFQKPEHTSPIDSPEDLVRQLEMEHTEAHVRIWDTIKLTTLMVLNGFEKGICHVAFSKTDSGSLLAVVDDSLKHLMSVWNWQKGKREGEVKASNDVVFECKWHPTIRNLIVLYGKGHFSFFNYDPATGVLVKTVATFEGRDKPKTVLSMCFGENDQVVTGDSNGTISIWDPRTCKTTKQAHSVHPGGVYSLTLAKSGKILSGGKDRMVSEWDLQDLVRTRRPIELPDEKGFPRVILQNGSELIIGTSSNTLLFGNIENSTNLTSLIEGDPGNLTFLLTCSSNQLITSSQCGTLRIWNHIDKKVEFSKKFIDSVECVDVDVTNTHIILGFAAGLWIVMNITKQQTIQEKKEGTAPITAVKFAPSGATFAVATKDPHLTIYRIDASKNLLVIARIHHIPAPIVALDFSSDSQYLRGQSIGAHLLFWTKAGEICDGTSVKDVKWGSSRVKIGFETALVAHSSNGQVTAVAQCEDISACGMENGTIRIYKNPVTSVTAGFVELLGHGRIIKSVAFSNKIQLFSCSPTDNSVFEWCLE.

The segment covering 77–88 (DQSRSPTCSGYS) has biased composition (polar residues). A disordered region spans residues 77–167 (DQSRSPTCSG…ARGSPMRKWV (91 aa)). Positions 104 to 117 (SPSHAPPRSSHANS) are enriched in low complexity. Residues 118–131 (KSLYINGMNNNSEE) show a composition bias toward polar residues. WD repeat units lie at residues 330–401 (GHTC…TLMV), 404–447 (GFEK…REGE), 499–537 (DKPK…TTKQ), 541–579 (VHPG…RTRR), 626–664 (GDPG…VEFS), 708–747 (EGTA…NLLV), 753–792 (HIPA…CDGT), 816–853 (SSNG…VTAG), and 859–890 (GHGR…EWCL).

The protein belongs to the WD repeat EMAP family.

It is found in the cytoplasm. The protein localises to the cytoskeleton. In terms of biological role, may modify the assembly dynamics of microtubules, such that microtubules are slightly longer, but more dynamic. This Caenorhabditis elegans protein is Echinoderm microtubule-associated protein-like elp-1 (elp-1).